The following is a 394-amino-acid chain: Acetate kinase (394 aa).

Asn10 contacts Mg(2+). An ATP-binding site is contributed by Lys17. Arg87 is a binding site for substrate. Catalysis depends on Asp144, which acts as the Proton donor/acceptor. Residues 204 to 208, 279 to 281, and 327 to 331 contribute to the ATP site; these read HLGNG, DMR, and GIGEN. Glu381 is a binding site for Mg(2+).

Belongs to the acetokinase family. In terms of assembly, homodimer. Mg(2+) is required as a cofactor. It depends on Mn(2+) as a cofactor.

It is found in the cytoplasm. It carries out the reaction acetate + ATP = acetyl phosphate + ADP. It participates in metabolic intermediate biosynthesis; acetyl-CoA biosynthesis; acetyl-CoA from acetate: step 1/2. Its function is as follows. Catalyzes the formation of acetyl phosphate from acetate and ATP. Can also catalyze the reverse reaction. This Ectopseudomonas mendocina (strain ymp) (Pseudomonas mendocina) protein is Acetate kinase.